Consider the following 397-residue polypeptide: LL-diaminopimelate aminotransferase (397 aa).

2 residues coordinate substrate: Y14 and G41. Pyridoxal 5'-phosphate-binding positions include Y71, 104–105 (AK), Y128, N174, Y205, and 233–235 (SFS). The substrate site is built by K105, Y128, and N174. N6-(pyridoxal phosphate)lysine is present on K236. R244 and N275 together coordinate pyridoxal 5'-phosphate. Residues N275 and R368 each contribute to the substrate site.

This sequence belongs to the class-I pyridoxal-phosphate-dependent aminotransferase family. LL-diaminopimelate aminotransferase subfamily. As to quaternary structure, homodimer. Pyridoxal 5'-phosphate serves as cofactor.

The catalysed reaction is (2S,6S)-2,6-diaminopimelate + 2-oxoglutarate = (S)-2,3,4,5-tetrahydrodipicolinate + L-glutamate + H2O + H(+). It functions in the pathway amino-acid biosynthesis; L-lysine biosynthesis via DAP pathway; LL-2,6-diaminopimelate from (S)-tetrahydrodipicolinate (aminotransferase route): step 1/1. Its function is as follows. Involved in the synthesis of meso-diaminopimelate (m-DAP or DL-DAP), required for both lysine and peptidoglycan biosynthesis. Catalyzes the direct conversion of tetrahydrodipicolinate to LL-diaminopimelate. The polypeptide is LL-diaminopimelate aminotransferase (Chlamydia pneumoniae (Chlamydophila pneumoniae)).